The chain runs to 372 residues: Ligninase LG6 (372 aa).

The N-terminal stretch at 1–21 (MALKQLAAAVALALSIQAAQG) is a signal peptide. A propeptide spanning residues 22-28 (AAVKEKR) is cleaved from the precursor. 2 cysteine pairs are disulfide-bonded: cysteine 31–cysteine 43 and cysteine 62–cysteine 148. Residue histidine 75 is the Proton acceptor of the active site. Ca(2+) contacts are provided by aspartate 76, glycine 94, aspartate 96, and serine 98. Residue histidine 204 coordinates heme b. Residues serine 205, aspartate 222, threonine 224, valine 227, and aspartate 229 each coordinate Ca(2+). Cysteine 277 and cysteine 345 form a disulfide bridge. N-linked (GlcNAc...) asparagine glycosylation is present at asparagine 285. The segment covering 352-361 (TLTTLPGPET) has biased composition (low complexity). The interval 352-372 (TLTTLPGPETSVQRIQPPPGA) is disordered.

The protein belongs to the peroxidase family. Ligninase subfamily. Heme b is required as a cofactor. The cofactor is Ca(2+).

The enzyme catalyses 1-(3,4-dimethoxyphenyl)-2-(2-methoxyphenoxy)propane-1,3-diol + H2O2 = 3,4-dimethoxybenzaldehyde + guaiacol + glycolaldehyde + H2O. It catalyses the reaction 2 (3,4-dimethoxyphenyl)methanol + H2O2 = 2 (3,4-dimethoxyphenyl)methanol radical + 2 H2O. It functions in the pathway secondary metabolite metabolism; lignin degradation. Its function is as follows. Depolymerization of lignin. Catalyzes the C(alpha)-C(beta) cleavage of the propyl side chains of lignin. The protein is Ligninase LG6 (GLG6) of Phanerodontia chrysosporium (White-rot fungus).